Here is a 271-residue protein sequence, read N- to C-terminus: Undecaprenyl-diphosphatase (271 aa).

Helical transmembrane passes span 5-25, 45-65, 86-106, 114-134, 149-169, 189-209, 226-246, and 251-271; these read YALF…FLPV, AATF…AVFW, TLSL…GLAI, LFGP…LIIA, ISYK…WPGF, AAEF…GLDL, VGFI…LALI, and FIPF…VFVA.

Belongs to the UppP family.

Its subcellular location is the cell inner membrane. The enzyme catalyses di-trans,octa-cis-undecaprenyl diphosphate + H2O = di-trans,octa-cis-undecaprenyl phosphate + phosphate + H(+). Catalyzes the dephosphorylation of undecaprenyl diphosphate (UPP). Confers resistance to bacitracin. In Aeromonas hydrophila subsp. hydrophila (strain ATCC 7966 / DSM 30187 / BCRC 13018 / CCUG 14551 / JCM 1027 / KCTC 2358 / NCIMB 9240 / NCTC 8049), this protein is Undecaprenyl-diphosphatase.